Consider the following 110-residue polypeptide: Thiosulfate sulfurtransferase GlpE (110 aa).

Residues 17–105 enclose the Rhodanese domain; the sequence is RENGAQVVDI…WRSVYPADTS (89 aa). Cysteine 65 functions as the Cysteine persulfide intermediate in the catalytic mechanism.

Belongs to the GlpE family.

It localises to the cytoplasm. It carries out the reaction thiosulfate + hydrogen cyanide = thiocyanate + sulfite + 2 H(+). The enzyme catalyses thiosulfate + [thioredoxin]-dithiol = [thioredoxin]-disulfide + hydrogen sulfide + sulfite + 2 H(+). In terms of biological role, transferase that catalyzes the transfer of sulfur from thiosulfate to thiophilic acceptors such as cyanide or dithiols. May function in a CysM-independent thiosulfate assimilation pathway by catalyzing the conversion of thiosulfate to sulfite, which can then be used for L-cysteine biosynthesis. This Pseudomonas aeruginosa (strain ATCC 15692 / DSM 22644 / CIP 104116 / JCM 14847 / LMG 12228 / 1C / PRS 101 / PAO1) protein is Thiosulfate sulfurtransferase GlpE.